Here is a 159-residue protein sequence, read N- to C-terminus: MVDRKRNYKDRDNRVEWEERVVSVQRVTKVVKGGKKLSFRAVVVVGDQQGKVGVGVGKASDVSTAVRKGVTDGKKNVITVPLTSSNSIPHKINGRFGAAKLVLRPSAPGCGVIAGGAPRIVLELAGIKNILSKQLGSNSLLNNARATIDGLSNLRTFVA.

The 64-residue stretch at 17-80 folds into the S5 DRBM domain; it reads WEERVVSVQR…TDGKKNVITV (64 aa).

The protein belongs to the universal ribosomal protein uS5 family. As to quaternary structure, part of the 30S ribosomal subunit. Contacts protein S4.

It is found in the plastid. The protein localises to the chloroplast. In terms of biological role, with S4 and S12 plays an important role in translational accuracy. The chain is Small ribosomal subunit protein uS5c (rps5) from Emiliania huxleyi (Coccolithophore).